A 209-amino-acid chain; its full sequence is Imidazole glycerol phosphate synthase subunit HisH (209 aa).

In terms of domain architecture, Glutamine amidotransferase type-1 spans M1–S205. The active-site Nucleophile is C79. Active-site residues include H180 and E182.

In terms of assembly, heterodimer of HisH and HisF.

The protein resides in the cytoplasm. It carries out the reaction 5-[(5-phospho-1-deoxy-D-ribulos-1-ylimino)methylamino]-1-(5-phospho-beta-D-ribosyl)imidazole-4-carboxamide + L-glutamine = D-erythro-1-(imidazol-4-yl)glycerol 3-phosphate + 5-amino-1-(5-phospho-beta-D-ribosyl)imidazole-4-carboxamide + L-glutamate + H(+). It catalyses the reaction L-glutamine + H2O = L-glutamate + NH4(+). It functions in the pathway amino-acid biosynthesis; L-histidine biosynthesis; L-histidine from 5-phospho-alpha-D-ribose 1-diphosphate: step 5/9. Its function is as follows. IGPS catalyzes the conversion of PRFAR and glutamine to IGP, AICAR and glutamate. The HisH subunit catalyzes the hydrolysis of glutamine to glutamate and ammonia as part of the synthesis of IGP and AICAR. The resulting ammonia molecule is channeled to the active site of HisF. The protein is Imidazole glycerol phosphate synthase subunit HisH of Bacillus cereus (strain ATCC 10987 / NRS 248).